A 180-amino-acid chain; its full sequence is ATP-dependent protease subunit HslV (180 aa).

Thr9 is a catalytic residue. The Na(+) site is built by Ala164, Cys167, and Thr170.

The protein belongs to the peptidase T1B family. HslV subfamily. In terms of assembly, a double ring-shaped homohexamer of HslV is capped on each side by a ring-shaped HslU homohexamer. The assembly of the HslU/HslV complex is dependent on binding of ATP.

It localises to the cytoplasm. The catalysed reaction is ATP-dependent cleavage of peptide bonds with broad specificity.. Its activity is regulated as follows. Allosterically activated by HslU binding. In terms of biological role, protease subunit of a proteasome-like degradation complex believed to be a general protein degrading machinery. This chain is ATP-dependent protease subunit HslV, found in Leptospira interrogans serogroup Icterohaemorrhagiae serovar Lai (strain 56601).